Here is a 201-residue protein sequence, read N- to C-terminus: 3-isopropylmalate dehydratase small subunit (201 aa).

This sequence belongs to the LeuD family. LeuD type 1 subfamily. As to quaternary structure, heterodimer of LeuC and LeuD.

It catalyses the reaction (2R,3S)-3-isopropylmalate = (2S)-2-isopropylmalate. The protein operates within amino-acid biosynthesis; L-leucine biosynthesis; L-leucine from 3-methyl-2-oxobutanoate: step 2/4. Functionally, catalyzes the isomerization between 2-isopropylmalate and 3-isopropylmalate, via the formation of 2-isopropylmaleate. This Methylorubrum extorquens (strain CM4 / NCIMB 13688) (Methylobacterium extorquens) protein is 3-isopropylmalate dehydratase small subunit.